A 304-amino-acid chain; its full sequence is ATP phosphoribosyltransferase (304 aa).

Belongs to the ATP phosphoribosyltransferase family. Long subfamily. Mg(2+) serves as cofactor.

It localises to the cytoplasm. The catalysed reaction is 1-(5-phospho-beta-D-ribosyl)-ATP + diphosphate = 5-phospho-alpha-D-ribose 1-diphosphate + ATP. It participates in amino-acid biosynthesis; L-histidine biosynthesis; L-histidine from 5-phospho-alpha-D-ribose 1-diphosphate: step 1/9. Its activity is regulated as follows. Feedback inhibited by histidine. Its function is as follows. Catalyzes the condensation of ATP and 5-phosphoribose 1-diphosphate to form N'-(5'-phosphoribosyl)-ATP (PR-ATP). Has a crucial role in the pathway because the rate of histidine biosynthesis seems to be controlled primarily by regulation of HisG enzymatic activity. In Xylella fastidiosa (strain M12), this protein is ATP phosphoribosyltransferase.